The chain runs to 434 residues: Alpha-enolase (434 aa).

Mg(2+) is bound at residue Ser40. The substrate site is built by His158 and Glu167. Catalysis depends on Glu210, which acts as the Proton donor. 3 residues coordinate Mg(2+): Asp245, Glu293, and Asp318. 2 residues coordinate substrate: Glu293 and Asp318. The active-site Proton acceptor is Lys343. Substrate contacts are provided by residues 370-373 (SHRS) and Lys394.

This sequence belongs to the enolase family. Homodimer. Mg(2+) serves as cofactor.

The protein localises to the cytoplasm. The catalysed reaction is (2R)-2-phosphoglycerate = phosphoenolpyruvate + H2O. Its pathway is carbohydrate degradation; glycolysis; pyruvate from D-glyceraldehyde 3-phosphate: step 4/5. In Xenopus laevis (African clawed frog), this protein is Alpha-enolase (eno1).